A 601-amino-acid polypeptide reads, in one-letter code: Elongation factor 4 (601 aa).

A tr-type G domain is found at 7-189 (KNIRNFSIVA…AIVTRLPPPQ (183 aa)). GTP is bound by residues 19-24 (DHGKST) and 136-139 (NKID).

It belongs to the TRAFAC class translation factor GTPase superfamily. Classic translation factor GTPase family. LepA subfamily.

Its subcellular location is the cell inner membrane. The catalysed reaction is GTP + H2O = GDP + phosphate + H(+). Required for accurate and efficient protein synthesis under certain stress conditions. May act as a fidelity factor of the translation reaction, by catalyzing a one-codon backward translocation of tRNAs on improperly translocated ribosomes. Back-translocation proceeds from a post-translocation (POST) complex to a pre-translocation (PRE) complex, thus giving elongation factor G a second chance to translocate the tRNAs correctly. Binds to ribosomes in a GTP-dependent manner. The protein is Elongation factor 4 of Methylocella silvestris (strain DSM 15510 / CIP 108128 / LMG 27833 / NCIMB 13906 / BL2).